The primary structure comprises 575 residues: Glycine--tRNA ligase (575 aa).

Residues arginine 96 and glutamate 162 each coordinate substrate. ATP-binding positions include 194-196 (RNE), 204-209 (IRLREF), 327-328 (EC), and 450-453 (GIDR). Position 209 to 213 (209 to 213 (FTQAE)) interacts with substrate. 446-450 (EPSYG) is a binding site for substrate.

Belongs to the class-II aminoacyl-tRNA synthetase family.

Its subcellular location is the cytoplasm. It catalyses the reaction tRNA(Gly) + glycine + ATP = glycyl-tRNA(Gly) + AMP + diphosphate. Its function is as follows. Catalyzes the attachment of glycine to tRNA(Gly). In Methanococcus maripaludis (strain C5 / ATCC BAA-1333), this protein is Glycine--tRNA ligase.